Consider the following 310-residue polypeptide: DDRGK domain-containing protein 1 (310 aa).

Residues 1-21 (MAAIIYLAIAAVASILLFVAV) form a helical membrane-spanning segment. At 22–310 (KLLSTDTKTE…DSPAEISVNA (289 aa)) the chain is on the cytoplasmic side. Disordered stretches follow at residues 38-85 (VGEL…DEYQ) and 110-162 (KAEK…LKEE). A compositionally biased stretch (basic residues) spans 52–70 (PRARARRGLRNKTNRSKTQ). The span at 76–85 (DYDDYDDEYQ) shows a compositional bias: acidic residues.

The protein belongs to the DDRGK1 family.

It is found in the endoplasmic reticulum membrane. Functionally, substrate adapter for ufmylation, the covalent attachment of the ubiquitin-like modifier UFM1 to substrate proteins. The sequence is that of DDRGK domain-containing protein 1 from Trichoplax adhaerens (Trichoplax reptans).